Here is a 302-residue protein sequence, read N- to C-terminus: Dihydroorotate dehydrogenase B (NAD(+)), catalytic subunit (302 aa).

FMN contacts are provided by residues Ser-23 and Lys-47–Gly-48. Substrate is bound by residues Lys-47 and Asn-71 to Leu-75. FMN-binding residues include Asn-101 and Asn-128. Asn-128 contacts substrate. Catalysis depends on Cys-131, which acts as the Nucleophile. The FMN site is built by Lys-166 and Ile-192. Asn-193–Thr-194 is a substrate binding site. Residues Gly-218, Gly-244–Gly-245, and Gly-266–Thr-267 contribute to the FMN site.

This sequence belongs to the dihydroorotate dehydrogenase family. Type 1 subfamily. As to quaternary structure, heterotetramer of 2 PyrK and 2 PyrD type B subunits. FMN serves as cofactor.

It is found in the cytoplasm. The enzyme catalyses (S)-dihydroorotate + NAD(+) = orotate + NADH + H(+). The protein operates within pyrimidine metabolism; UMP biosynthesis via de novo pathway; orotate from (S)-dihydroorotate (NAD(+) route): step 1/1. In terms of biological role, catalyzes the conversion of dihydroorotate to orotate with NAD(+) as electron acceptor. This is Dihydroorotate dehydrogenase B (NAD(+)), catalytic subunit (pyrD) from Alkaliphilus oremlandii (strain OhILAs) (Clostridium oremlandii (strain OhILAs)).